The primary structure comprises 458 residues: MAAQGATAAVAATTSGTVGEGEPGPGENAAVEGPARSPGRVSPPTPARGEPEVTVEIGETYLCRRPDSTWHSAEVIQSRVNDQEGREEFYVHYVGFNRRLDEWVDKNRLALTKTVKDAVQKNSEKYLSELAEQPERKITRNQKRKHDEINHVQKTYAEMDPTTAALEKEHEAITKVKYVDKIHIGNYEIDAWYFSPFPEDYGKQPKLWLCEYCLKYMKFEKSYRFHLGQCQWRQPPGKEIYRKSNISVYEVDGKDHKIYCQNLCLLAKLFLDHKTLYFDVEPFVFYILTEVDRQGAHIVGYFSKEKESPDGNNVACILTLPPYQRRGYGKFLIAFSYELSKLESTVGSPEKPLSDLGKLSYRSYWSWVLLEILRDFRGTLSIKDLSQMTSITQNDIISTLQSLNMVKYWKGQHVICVTPKLVEEHLKSAQYKKPPITVDSVCLKWAPPKHKQVKLSKK.

Low complexity-rich tracts occupy residues 1 to 17 (MAAQGATAAVAATTSGT) and 25 to 35 (PGENAAVEGPA). The disordered stretch occupies residues 1 to 52 (MAAQGATAAVAATTSGTVGEGEPGPGENAAVEGPARSPGRVSPPTPARGEPE). Residue Ala2 is modified to N-acetylalanine. 2 positions are modified to phosphoserine: Ser37 and Ser42. Positions 55 to 110 (VEIGETYLCRRPDSTWHSAEVIQSRVNDQEGREEFYVHYVGFNRRLDEWVDKNRLA) constitute a Tudor-knot domain. Lys113 is modified (N6-acetyllysine). Residues 140 to 149 (RNQKRKHDEI) carry the Nuclear localization signal motif. Residues 174–447 (TKVKYVDKIH…VDSVCLKWAP (274 aa)) form the MYST-type HAT domain. The segment at 174–458 (TKVKYVDKIH…KHKQVKLSKK (285 aa)) is sufficient for interaction with KANSL1. A C2HC MYST-type zinc finger spans residues 207–232 (LWLCEYCLKYMKFEKSYRFHLGQCQW). 4 residues coordinate Zn(2+): Cys210, Cys213, His226, and Cys230. Lys274 is subject to N6-acetyllysine. Acetyl-CoA is bound by residues Ile317, Thr319, Arg325, Arg326, Gly327, Gly329, and Lys330. At Ser348 the chain carries Phosphoserine. The active-site Proton donor/acceptor is Glu350. The acetyl-CoA site is built by Ser354, Ser363, Tyr408, and Lys432.

This sequence belongs to the MYST (SAS/MOZ) family. In terms of assembly, component of a multisubunit histone acetyltransferase complex (MSL) at least composed of the MOF/KAT8, MSL1/hampin, MSL2L1 and MSL3L1. Component of the NSL complex at least composed of MOF/KAT8, KANSL1, KANSL2, KANSL3, MCRS1, PHF20, OGT1/OGT, WDR5 and HCFC1. Component of some MLL1/MLL complex, at least composed of the core components KMT2A/MLL1, ASH2L, HCFC1, WDR5 and RBBP5, as well as the facultative components BACC1, CHD8, E2F6, HSP70, INO80C, KANSL1, LAS1L, MAX, MCRS1, MGA, MOF/KAT8, PELP1, PHF20, PRP31, RING2, RUVB1/TIP49A, RUVB2/TIP49B, SENP3, TAF1, TAF4, TAF6, TAF7, TAF9 and TEX10. Interacts with the chromodomain of MORF4L1/MRG15. Interacts with ATM (via its Tudor-knot domain); possibly regulating the activity of ATM. Interacts with NELFD. Acetylation at Lys-274 facilitates cognate substrate Lys-binding and acetylation. Although considered as an autoacetylation event, acetylation at Lys-274 probably takes place via a non-enzymatic process following acetyl-CoA-binding, which primes KAT8 for cognate protein-lysine acetylation. As to expression, during oocyte development, expressed in both oocytes and granulosa cells.

The protein resides in the nucleus. Its subcellular location is the chromosome. It localises to the mitochondrion. The enzyme catalyses L-lysyl-[histone] + acetyl-CoA = N(6)-acetyl-L-lysyl-[histone] + CoA + H(+). The catalysed reaction is L-lysyl-[protein] + acetyl-CoA = N(6)-acetyl-L-lysyl-[protein] + CoA + H(+). It carries out the reaction propanoyl-CoA + L-lysyl-[protein] = N(6)-propanoyl-L-lysyl-[protein] + CoA + H(+). With respect to regulation, the acetyltransferase activity is inhibited by anacardic acid derivatives. Histone acetyltransferase that catalyzes histone H4 acetylation at 'Lys-5'- and 'Lys-8' (H4K5ac and H4K8ac) or 'Lys-16' (H4K16ac), depending on the context. Catalytic component of the MSL histone acetyltransferase complex, a multiprotein complex that mediates the majority of histone H4 acetylation at 'Lys-16' (H4K16ac), an epigenetic mark that prevents chromatin compaction. H4K16ac constitutes the only acetylation mark intergenerationally transmitted and regulates key biological processes, such as oogenesis, embryonic stem cell pluripotency, hematopoiesis or glucose metabolism. The MSL complex is required for chromosome stability and genome integrity by maintaining homeostatic levels of H4K16ac. The MSL complex is also involved in gene dosage by promoting up-regulation of genes expressed by the X chromosome. X up-regulation is required to compensate for autosomal biallelic expression. The MSL complex also participates in gene dosage compensation by promoting expression of Tsix non-coding RNA. As part of the NSL histone acetyltransferase complex, catalyzes histone H4 acetylation at 'Lys-5'- and 'Lys-8' (H4K5ac and H4K8ac) at transcription start sites and promotes transcription initiation. The NSL complex also acts as a regulator of gene expression in mitochondria: KAT8 associates with mitochondrial DNA and controls expression of respiratory genes in an acetyltransferase-dependent mechanism. Also functions as an acetyltransferase for non-histone targets, such as ALKBH5, COX17, IRF3, KDM1A/LSD1, LMNA, PAX7 or TP53/p53. Acts as an inhibitor of antiviral immunity by acetylating IRF3, preventing IRF3 recruitment to promoters. Acts as a regulator of asymmetric division in muscle stem cells by mediating acetylation of PAX7. As part of the NSL complex, acetylates TP53/p53 at 'Lys-120'. Acts as a regulator of epithelial-to-mesenchymal transition as part of the NSL complex by mediating acetylation of KDM1A/LSD1. The NSL complex is required for nuclear architecture maintenance by mediating acetylation of LMNA. Promotes mitochondrial integrity by catalyzing acetylation of COX17. In addition to protein acetyltransferase activity, able to mediate protein propionylation. This Mus musculus (Mouse) protein is Histone acetyltransferase KAT8.